A 702-amino-acid chain; its full sequence is ATP-dependent RNA helicase DDX4 (702 aa).

The interval 22–228 (FEKDKYSSGA…YIPPPPPEDE (207 aa)) is disordered. Residues 29-46 (SGANGDTFNRTSASSDIG) are compositionally biased toward polar residues. 2 stretches are compositionally biased toward gly residues: residues 58-68 (GGFGRGKGFGN) and 125-137 (RGSF…GFGL). Composition is skewed to polar residues over residues 141–150 (NSESDQDQGT) and 195–215 (SGKN…SQGP). A phosphoserine mark is found at serine 195 and serine 199. An interaction with RANBP9 region spans residues 201-220 (KSETEGGESSDSQGPKVTYI). A Q motif motif is present at residues 261–289 (LTFEEANLCQTLNNNIAKAGYTKLTPVQK). In terms of domain architecture, Helicase ATP-binding spans 292 to 475 (IPIVLAGRDL…GDFLKSSYLF (184 aa)). Residue 305-312 (AQTGSGKT) participates in ATP binding. The DEAD box signature appears at 419 to 422 (DEAD). The Helicase C-terminal domain occupies 503–648 (KLVEILRNIG…DVPAWLEEIA (146 aa)). Residues 681–693 (TLNTAGISSSQAP) show a composition bias toward polar residues. The segment at 681–702 (TLNTAGISSSQAPNPVDDESWD) is disordered. Serine 700 bears the Phosphoserine mark.

The protein belongs to the DEAD box helicase family. DDX4/VASA subfamily. In terms of assembly, found in a mRNP complex, at least composed of TDRD1, TDRD6, TDRD7 and DDX4. Interacts with RANBP9. Interacts with RANBP10. Interacts with PIWIL2 and MAEL. Interacts with BMAL1 and CLOCK. Interacts with Tex19.1 and, probably, Tex19.2. Interacts with RBM46. In terms of tissue distribution, testis-specific.

The protein resides in the cytoplasm. It localises to the perinuclear region. It catalyses the reaction ATP + H2O = ADP + phosphate + H(+). In terms of biological role, ATP-dependent RNA helicase required during spermatogenesis to repress transposable elements and preventing their mobilization, which is essential for the germline integrity. Acts via the piRNA metabolic process, which mediates the repression of transposable elements during meiosis by forming complexes composed of piRNAs and Piwi proteins and governs the methylation and subsequent repression of transposons. Involved in the secondary piRNAs metabolic process, the production of piRNAs in fetal male germ cells through a ping-pong amplification cycle. Required for PIWIL2 slicing-triggered piRNA biogenesis: helicase activity enables utilization of one of the slice cleavage fragments generated by PIWIL2 and processing these pre-piRNAs into piRNAs. In Mus musculus (Mouse), this protein is ATP-dependent RNA helicase DDX4.